The following is a 260-amino-acid chain: Putative [LysW]-aminoadipate/[LysW]-glutamate kinase (260 aa).

Substrate contacts are provided by residues 35 to 36 (GG), Arg62, and Asn162.

Belongs to the acetylglutamate kinase family. LysZ subfamily.

The protein resides in the cytoplasm. It catalyses the reaction [amino-group carrier protein]-C-terminal-N-(1,4-dicarboxybutan-1-yl)-L-glutamine + ATP = [amino-group carrier protein]-C-terminal-N-(1-carboxy-5-phosphooxy-5-oxopentan-1-yl)-L-glutamine + ADP. The catalysed reaction is [amino-group carrier protein]-C-terminal-gamma-(L-glutamyl)-L-glutamate + ATP = [amino-group carrier protein]-C-terminal-gamma-(5-phospho-L-glutamyl)-L-glutamate + ADP. It functions in the pathway amino-acid biosynthesis; L-lysine biosynthesis via AAA pathway; L-lysine from L-alpha-aminoadipate (Thermus route): step 2/5. Its pathway is amino-acid biosynthesis; L-arginine biosynthesis. Functionally, involved in both the arginine and lysine biosynthetic pathways. Phosphorylates the LysW-bound precursors glutamate (for arginine biosynthesis), respectively alpha-aminoadipate (for lysine biosynthesis). This chain is Putative [LysW]-aminoadipate/[LysW]-glutamate kinase, found in Pyrobaculum neutrophilum (strain DSM 2338 / JCM 9278 / NBRC 100436 / V24Sta) (Thermoproteus neutrophilus).